The chain runs to 931 residues: Protein translocase subunit SecA (931 aa).

Residues Q87, 105–109, and D515 contribute to the ATP site; that span reads GEGKT. Residues C915, C917, C926, and H927 each contribute to the Zn(2+) site.

It belongs to the SecA family. Monomer and homodimer. Part of the essential Sec protein translocation apparatus which comprises SecA, SecYEG and auxiliary proteins SecDF-YajC and YidC. The cofactor is Zn(2+).

Its subcellular location is the cell inner membrane. The protein localises to the cytoplasm. It catalyses the reaction ATP + H2O + cellular proteinSide 1 = ADP + phosphate + cellular proteinSide 2.. Part of the Sec protein translocase complex. Interacts with the SecYEG preprotein conducting channel. Has a central role in coupling the hydrolysis of ATP to the transfer of proteins into and across the cell membrane, serving both as a receptor for the preprotein-SecB complex and as an ATP-driven molecular motor driving the stepwise translocation of polypeptide chains across the membrane. The protein is Protein translocase subunit SecA of Burkholderia ambifaria (strain ATCC BAA-244 / DSM 16087 / CCUG 44356 / LMG 19182 / AMMD) (Burkholderia cepacia (strain AMMD)).